A 303-amino-acid chain; its full sequence is ATP-dependent Clp protease ATP-binding subunit CLPT3, chloroplastic (303 aa).

Residues 1 to 37 (MLLANAPHNGCSRLQQVTLLRASGAKLHRKRALTVVA) constitute a chloroplast transit peptide. Disordered regions lie at residues 185-214 (ASTE…RDSD) and 278-303 (RDDN…DEYE).

This sequence belongs to the ClpA/ClpB family.

It is found in the plastid. Its subcellular location is the chloroplast. Its function is as follows. Accessory protein regulating the assembly of the plastid Clp protease system. This is ATP-dependent Clp protease ATP-binding subunit CLPT3, chloroplastic from Chlamydomonas reinhardtii (Chlamydomonas smithii).